The primary structure comprises 149 residues: Transcription antitermination protein NusB (149 aa).

It belongs to the NusB family.

Functionally, involved in transcription antitermination. Required for transcription of ribosomal RNA (rRNA) genes. Binds specifically to the boxA antiterminator sequence of the ribosomal RNA (rrn) operons. The polypeptide is Transcription antitermination protein NusB (Acinetobacter baumannii (strain AB307-0294)).